Here is a 241-residue protein sequence, read N- to C-terminus: ATP synthase subunit a (241 aa).

5 helical membrane passes run 30–50 (GQVF…VVVG), 91–111 (FIGT…LVPW), 128–148 (INTT…AGLS), 193–213 (LVVA…VMFL), and 214–234 (GLFT…YYIG).

It belongs to the ATPase A chain family. As to quaternary structure, F-type ATPases have 2 components, CF(1) - the catalytic core - and CF(0) - the membrane proton channel. CF(1) has five subunits: alpha(3), beta(3), gamma(1), delta(1), epsilon(1). CF(0) has four main subunits: a, b, b' and c.

The protein resides in the cellular thylakoid membrane. Key component of the proton channel; it plays a direct role in the translocation of protons across the membrane. The chain is ATP synthase subunit a from Prochlorococcus marinus (strain MIT 9313).